A 615-amino-acid chain; its full sequence is Angiotensin-converting enzyme (615 aa).

The first 17 residues, 1-17 (MRLFLLALLATLAVTQA), serve as a signal peptide directing secretion. The region spanning 19 to 607 (VKEEIQAKEY…IKNNVHIGWT (589 aa)) is the Peptidase M2 domain. A glycan (N-linked (GlcNAc...) asparagine) is linked at N53. The cysteines at positions 133 and 141 are disulfide-linked. Residues N196 and N311 are each glycosylated (N-linked (GlcNAc...) asparagine). C336 and C354 form a disulfide bridge. Residue H367 participates in Zn(2+) binding. E368 serves as the catalytic Proton acceptor. H371 and E395 together coordinate Zn(2+). The active-site Proton donor is H497. C522 and C540 are oxidised to a cystine.

This sequence belongs to the peptidase M2 family. It depends on Zn(2+) as a cofactor. Glycosylated. Expressed in vesicular structures in spermatocytes and early spermatids (at protein level).

The protein resides in the secreted. It localises to the extracellular space. It carries out the reaction Release of a C-terminal dipeptide, oligopeptide-|-Xaa-Yaa, when Xaa is not Pro, and Yaa is neither Asp nor Glu. Thus, conversion of angiotensin I to angiotensin II, with increase in vasoconstrictor activity, but no action on angiotensin II.. With respect to regulation, inhibited by captopril and, to a lesser extent, by lisinopril, trandolaprilat, fosinoprilat and enalaprilat. Its function is as follows. May be involved in the specific maturation or degradation of a number of bioactive peptides. May play a role in the contractions of the heart, gut and testes, and in spermatid differentiation. The polypeptide is Angiotensin-converting enzyme (Ance) (Drosophila melanogaster (Fruit fly)).